Here is a 127-residue protein sequence, read N- to C-terminus: Glycine cleavage system H protein (127 aa).

The 83-residue stretch at 22–104 (EVVIGITHFA…YEGAWMVKVE (83 aa)) folds into the Lipoyl-binding domain. At lysine 63 the chain carries N6-lipoyllysine.

It belongs to the GcvH family. As to quaternary structure, the glycine cleavage system is composed of four proteins: P, T, L and H. Requires (R)-lipoate as cofactor.

The glycine cleavage system catalyzes the degradation of glycine. The H protein shuttles the methylamine group of glycine from the P protein to the T protein. In terms of biological role, is also involved in protein lipoylation via its role as an octanoyl/lipoyl carrier protein intermediate. This Bacillus cereus (strain ZK / E33L) protein is Glycine cleavage system H protein.